The following is a 649-amino-acid chain: MGSFCSKSLGINFGSEYSGSSVADDGREPDFGHSQPNGQTSLIVPGMRQLMVKDVKEQNQLKDVFSFREREAEDNFYDGIPTYTMAPSQKIRSAKSTQTAVSKVTEASKLLGKAGLGRAKDVLDTLGSSMTDLSSGGFTSGVATKGNELGILAFEVANTIVKSSNLIESLSKRNIEHLKGTILYSEGVQNLVSNDFDELLRLVAADKRQELQVFSGEVVRFGNRSKDFQWHNLQRYFDRISKELTPQRQLKEDAVLVVDQLMVLVQYTAELYQELQVLYRLEKDYEQKRREEENSANSSKGDGLAILKTELKAQRKVVKSLKKKSLWSRGFEEVMEKLVDIVHFLLLEIHNIFGGADDQPSKKGAAEYDKRLGPAGLALHYANIIVQIDTLVARASSITSNARDSLYQSLPPGIKLALRSKIKSFNVDKELSVTQIKDEMERTLHWLVPVAGNTTKAHHGFGWVGEWANTGTDFTSKPSGGDILRIETLYHASKEKTEIYILGQIIWLQHLVTKAKSDARGGPRLSSIKSPLDTTNQQLISEPLSVPIVTDEEQKMLQEASKRKRTPCVSKSQDFDSEYSRARKCDPLSKSSEYFRGVRRSKSAAVKRYSSGFPLLDFAIDKEKVLDVIDRVDVPRDYKALLKEGSLSF.

Gly2 carries the N-myristoyl glycine lipid modification. The disordered stretch occupies residues 18–43 (SGSSVADDGREPDFGHSQPNGQTSLI).

The protein resides in the nucleus. Its function is as follows. Promotes plant growth, especially at the vegetative stage, probably via the regulation of phytosulfokine (PSK) signaling; PSK are peptide phytohormones acting as growth factors. Together with PSI2 and PSI3, required during vegetative growth and reproduction. May also have a function in carbohydrate metabolism. The protein is Protein PSK SIMULATOR 3 of Arabidopsis thaliana (Mouse-ear cress).